Consider the following 331-residue polypeptide: Proline-rich protein 33 (331 aa).

Disordered stretches follow at residues 1–112, 128–185, and 204–247; these read MGPQ…SVPR, SLES…PKVA, and APEP…APAS. Pro residues predominate over residues 94-105; sequence PEEPPVPRPPPG. A compositionally biased stretch (low complexity) spans 149 to 169; that stretch reads PPMAGPAAEAERVSSPAWASS. Pro residues predominate over residues 170-185; sequence PTPPSGPHPCPVPKVA. The span at 217 to 238 shows a compositional bias: low complexity; the sequence is EPEVPTPTEQEVPAPTEQEVPA.

This is Proline-rich protein 33 (PRR33) from Homo sapiens (Human).